We begin with the raw amino-acid sequence, 570 residues long: Formate--tetrahydrofolate ligase (570 aa).

65–72 contacts ATP; that stretch reads TPHGEGKT.

Belongs to the formate--tetrahydrofolate ligase family.

The enzyme catalyses (6S)-5,6,7,8-tetrahydrofolate + formate + ATP = (6R)-10-formyltetrahydrofolate + ADP + phosphate. The protein operates within one-carbon metabolism; tetrahydrofolate interconversion. The chain is Formate--tetrahydrofolate ligase from Shewanella oneidensis (strain ATCC 700550 / JCM 31522 / CIP 106686 / LMG 19005 / NCIMB 14063 / MR-1).